A 906-amino-acid chain; its full sequence is MISSKVAPGEEEQGESPSKVELGEAEEQREAPLEGQLEAVPLDEAGPSWTTGPPLERLPPLGQEAPPPRRCHTNCLEAPLSRGFQRFGATVGANPWLFLLGPALLTASLGTGLIFLPKEKENLEEQYTPIGSPAKAERRFVQGHFSTNDTYRFSASRTSSETNFASILVVSLANSLLEPEIFKEVSKLDQAVQALKVVQENGTQILYQEVCAKYKTLCVPPNPLLFSWQHNSSLNLSDLTFPIHNTPTQLIYLAGFFGGNVLGQMTGKSQRLVESRAMRLLYYLKTEDPEDSERSQAWLTHFLDHFNDMKSSLTLEEIEVVYFSSLSRQLEFEATSKTVIPLFHLAYILIILFAVVSCSRLDCIRNKMCVAVFGVFSVAMSVVSGFGLMLHLGVPFVIIVANSPFLILGVGVDDMFIMISAWQKTSLSESIRERLSNSYSKVAVSITITTITNVLAFYTGITSSFRSVQYFCIYTGTTLLFCYFYSITCFGAVMALDGKREVAWSRWLEKPDQKYSSLKKSCCVPFGSLIDKHGEDNHPMNLFFRDYFGPFLTTSKAKFIVVLLYIFYIISSIYGCFQVQEGLDLRNLASDDSYITPYFNVEEDYFSDYGPRVMVIVTESVNYWDNDVRQKLDKCMTQFEENEYVDKNLTEFWLEAYMQYMNSSGNNPNDKNTFMNNIAGFLQFFPIFTYDINISSSNEITSSRGFIQIVDVSSSSNKKRMLLKLRSIAENCEVPLMVYNQAFIYFDQYAAIIENTVRNVMIASTAMFIVSLLLIPHPVCSLWVTFAIASVIVGVTGFMAFWNVNLDSISMINLVICIGFSFDFSAHISYAFVSSTEPSVNKKSIEALYLLGYPVLQSAISTIIGVCVLSAAKAYIFRTFFKIMFLVMFFGAAHGLIFIPVFLTFF.

Residues 1–70 (MISSKVAPGE…LGQEAPPPRR (70 aa)) are disordered. Residues Asn148 and Asn235 are each glycosylated (N-linked (GlcNAc...) asparagine). A run of 11 helical transmembrane segments spans residues 338-358 (TVIP…VVSC), 370-390 (VAVF…GLML), 392-412 (LGVP…GVGV), 442-462 (VAVS…TGIT), 476-496 (GTTL…VMAL), 559-579 (FIVV…CFQV), 760-780 (VMIA…HPVC), 782-802 (LWVT…MAFW), 814-834 (LVIC…AFVS), 848-868 (LYLL…GVCV), and 883-903 (IMFL…PVFL). The 158-residue stretch at 339–496 (VIPLFHLAYI…ITCFGAVMAL (158 aa)) folds into the SSD domain.

The protein belongs to the patched family. In terms of tissue distribution, expressed in germ cells of the testis (at protein level).

The protein resides in the cell projection. The protein localises to the cilium. Its subcellular location is the flagellum membrane. It localises to the endoplasmic reticulum membrane. In terms of biological role, may play a role in sperm development or sperm function. However, does not appear to have an essential role in spermatogenesis or male fertility. This Mus musculus (Mouse) protein is Patched domain-containing protein 3 (Ptchd3).